A 345-amino-acid chain; its full sequence is Probable G-protein coupled receptor 139 (345 aa).

At 1-21 the chain is on the extracellular side; sequence MEHTHAHLAANSSACGLGFVP. N11 carries N-linked (GlcNAc...) asparagine glycosylation. A helical membrane pass occupies residues 22-42; that stretch reads VVYYSFLLCLGLPANILTVII. The Cytoplasmic portion of the chain corresponds to 43–57; the sequence is LSQLVARRQKSSYNY. A helical membrane pass occupies residues 58–78; sequence LLALAAADILVLFFIVFVDFL. Residues 79 to 94 are Extracellular-facing; that stretch reads LEDFILTMQMPLIPDK. A helical transmembrane segment spans residues 95 to 115; sequence IIEVLEFSSIHTSIWITVPLT. Residues 116 to 140 are Cytoplasmic-facing; sequence VDRYIAVCHPLKYHTVSYPARTRKV. A helical membrane pass occupies residues 141 to 161; the sequence is ILSVYITCFLTSIPYYWWPNI. The Extracellular portion of the chain corresponds to 162-173; it reads WTEDYISTSMHH. Residues 174–194 form a helical membrane-spanning segment; the sequence is VLVWIHCFTVYLVPCSIFFIL. The Cytoplasmic segment spans residues 195–220; it reads NSIIVYKLRRKSNFRLRGYSTGKTTA. A helical membrane pass occupies residues 221–241; that stretch reads ILFTITSIFATLWAPRIIMIL. The Extracellular portion of the chain corresponds to 242 to 260; sequence YHLYGAPIQNPWLVHIMLD. Residues 261-281 traverse the membrane as a helical segment; sequence VANMLALLNTAINFFLYCFIS. Residues 282 to 345 are Cytoplasmic-facing; sequence KRFRTMAAAT…KHGKPIKVSP (64 aa).

It belongs to the G-protein coupled receptor 1 family. As to expression, expressed almost exclusively in the brain. Abundantly expressed in the ventrolateral region of caudate putamen, the habenular nucleus, the zona incerta, and the medial mammillary nucleus.

It localises to the cell membrane. Functionally, orphan receptor. Seems to act through a G(q/11)-mediated pathway. The sequence is that of Probable G-protein coupled receptor 139 (Gpr139) from Mus musculus (Mouse).